Consider the following 469-residue polypeptide: Glutamate--tRNA ligase 2 (469 aa).

The short motif at 10-20 (PSPTGFLHIGS) is the 'HIGH' region element. The short motif at 239–243 (KLSKR) is the 'KMSKS' region element. K242 contributes to the ATP binding site.

It belongs to the class-I aminoacyl-tRNA synthetase family. Glutamate--tRNA ligase type 1 subfamily. Monomer.

It localises to the cytoplasm. The enzyme catalyses tRNA(Glu) + L-glutamate + ATP = L-glutamyl-tRNA(Glu) + AMP + diphosphate. In terms of biological role, catalyzes the attachment of glutamate to tRNA(Glu) in a two-step reaction: glutamate is first activated by ATP to form Glu-AMP and then transferred to the acceptor end of tRNA(Glu). This is Glutamate--tRNA ligase 2 from Rickettsia typhi (strain ATCC VR-144 / Wilmington).